The sequence spans 357 residues: Meiotic driver wtf9 (357 aa).

The tract at residues 1 to 39 (MKNKYYPLRSSMDEMSAKNDNEIDLEKGPLPEYNSEDGS) is disordered. Residues 11 to 29 (SMDEMSAKNDNEIDLEKGP) show a composition bias toward basic and acidic residues. 7 helical membrane-spanning segments follow: residues 89–109 (LLIS…CVNP), 119–139 (AFFV…FCFF), 149–169 (CIKV…ISLA), 198–218 (VVII…RSKF), 232–252 (CSIS…FWTL), 256–276 (FSGL…TKGL), and 286–306 (ATGY…LFFY).

Belongs to the WTF family. Homomer. Forms protein aggregates. The two isoforms can interact with each other and with themselves. High sequence similarity is required for their interaction.

The protein resides in the spore membrane. The protein localises to the vacuole membrane. It is found in the ascus epiplasm. Its subcellular location is the cytoplasm. It localises to the endoplasmic reticulum membrane. Functionally, promotes unequal transmission of alleles from the parental zygote to progeny spores by acting as poison/antidote system where the poison and antidote proteins are produced from the same locus; the poison component is trans-acting and targets all spores within an ascus whereas the antidote component is spore-specific, leading to poisoning of all progeny that do not inherit the allele. Localizes isoform 2 to the vacuole thereby facilitating its degradation. Its function is as follows. Forms toxic aggregates that disrupt spore maturation. This is Meiotic driver wtf9 from Schizosaccharomyces kambucha (Fission yeast).